Consider the following 94-residue polypeptide: RING finger protein Z (94 aa).

Over residues 1-19 the composition is skewed to polar residues; that stretch reads MGNCNGASKSNQPDSSRVT. The tract at residues 1–20 is disordered; that stretch reads MGNCNGASKSNQPDSSRVTQ. Gly2 carries N-myristoyl glycine; by host lipidation. An RING-type; atypical zinc finger spans residues 39–75; it reads CKCCWFADTNLITCNDHYLCLRCHQVMLRNSDLCNIC. A PTAP/PSAP motif motif is present at residues 89-92; it reads PTAP.

The protein belongs to the arenaviridae Z protein family. In terms of assembly, interacts with protein NP; this interaction probably directs the encapsidated genome to budding sites. Interacts (via RING domain) with polymerase L; this interaction inhibits viral transcription and replication, Z partially blocks the product exit tunnel for the releasing nascent RNA product. Interacts with the glycoprotein complex; this interaction plays a role in virion budding. Interacts with host eIF4E; this interaction results in eIF4E reduced affinity for its substrate, the 5'-m7 G cap structure. Interacts (via late-budding domain) with host TSG101; this interaction is essential for budding and release of viral particles. Interacts with host RPLP0; this interaction may serve to load ribosome-like particles inside the virion. Interacts with host PML; this interaction induces PML bodies redistribution in the cytoplasm upon viral infection. Myristoylation is required for the role of RING finger protein Z in assembly and budding.

The protein resides in the virion. It localises to the host cytoplasm. The protein localises to the host perinuclear region. It is found in the host cell membrane. Functionally, plays a crucial role in virion assembly and budding. Expressed late in the virus life cycle, it acts as an inhibitor of viral transcription and RNA synthesis by interacting with the viral polymerase L. Presumably recruits the NP encapsidated genome to cellular membranes at budding sites via direct interaction with NP. Plays critical roles in the final steps of viral release by interacting with host TSG101, a member of the vacuolar protein-sorting pathway and using other cellular host proteins involved in vesicle formation pathway. The budding of the virus progeny occurs after association of protein Z with the viral glycoprotein complex SSP-GP1-GP2 at the cell periphery, step that requires myristoylation of protein Z. Also selectively represses protein production by associating with host eIF4E. In cell-based minigenome assay, has an inhibitory effect on the ribonucleoprotein machinery (vRNP), which is responsible for the replication and transcription of the viral genome. This chain is RING finger protein Z, found in Akodon azarae (Azara's grass mouse).